Consider the following 454-residue polypeptide: UDP-N-acetylmuramoylalanine--D-glutamate ligase (454 aa).

118–124 (GTNGKTT) serves as a coordination point for ATP.

Belongs to the MurCDEF family.

It is found in the cytoplasm. It catalyses the reaction UDP-N-acetyl-alpha-D-muramoyl-L-alanine + D-glutamate + ATP = UDP-N-acetyl-alpha-D-muramoyl-L-alanyl-D-glutamate + ADP + phosphate + H(+). The protein operates within cell wall biogenesis; peptidoglycan biosynthesis. Its function is as follows. Cell wall formation. Catalyzes the addition of glutamate to the nucleotide precursor UDP-N-acetylmuramoyl-L-alanine (UMA). This Thermosynechococcus vestitus (strain NIES-2133 / IAM M-273 / BP-1) protein is UDP-N-acetylmuramoylalanine--D-glutamate ligase.